The sequence spans 531 residues: Acetate CoA-transferase YdiF (531 aa).

Glu333 acts as the 5-glutamyl coenzyme A thioester intermediate in catalysis.

The protein belongs to the 3-oxoacid CoA-transferase family. Homotetramer; dimer of dimers.

The catalysed reaction is an acyl-CoA + acetate = a carboxylate + acetyl-CoA. Functionally, coA transferase having broad substrate specificity for short-chain acyl-CoA thioesters with the activity decreasing when the length of the carboxylic acid chain exceeds four carbons. Exhibits high activity with acetoacetyl-CoA, propionyl-CoA, crotonoyl-CoA or butyryl-CoA as donors, with acetate as an acceptor. When acetyl-CoA is used as the donor, propionate, acetoacetate, butyrate, isobutyrate, and 4-hydroxybutyrate can be utilized as acceptors but not isovalerate. May play a role in short-chain fatty acid metabolism in E.coli. This is Acetate CoA-transferase YdiF from Escherichia coli O157:H7.